The sequence spans 86 residues: Large ribosomal subunit protein bL31 (86 aa).

A disordered region spans residues 65–86 (YGMGSANSATSKEQKEEKDSKK). Over residues 76–86 (KEQKEEKDSKK) the composition is skewed to basic and acidic residues.

The protein belongs to the bacterial ribosomal protein bL31 family. Type A subfamily. In terms of assembly, part of the 50S ribosomal subunit.

In terms of biological role, binds the 23S rRNA. The protein is Large ribosomal subunit protein bL31 of Prochlorococcus marinus (strain AS9601).